Consider the following 254-residue polypeptide: Mediator of RNA polymerase II transcription subunit 6 (254 aa).

A disordered region spans residues 190–254; it reads PTFYQTKPGE…PPPEKRARVQ (65 aa). Over residues 227–245 the composition is skewed to pro residues; sequence PPAPPAPPRPPPQTTPNKP.

This sequence belongs to the Mediator complex subunit 6 family. In terms of assembly, component of the Mediator complex.

The protein resides in the nucleus. In terms of biological role, component of the Mediator complex, a coactivator involved in the regulated transcription of nearly all RNA polymerase II-dependent genes. Mediator functions as a bridge to convey information from gene-specific regulatory proteins to the basal RNA polymerase II transcription machinery. Mediator is recruited to promoters by direct interactions with regulatory proteins and serves as a scaffold for the assembly of a functional preinitiation complex with RNA polymerase II and the general transcription factors. In Danio rerio (Zebrafish), this protein is Mediator of RNA polymerase II transcription subunit 6 (med6).